The following is a 275-amino-acid chain: Lectin (275 aa).

Positions 1-30 (MASLQTQMISFYLIFLSILLTTIFFFKVNS) are cleaved as a signal peptide. Residues aspartate 111 and glycine 129 each contribute to the D-glucose site. Mn(2+) is bound by residues glutamate 149 and aspartate 151. Residues aspartate 151, phenylalanine 153, asparagine 155, and aspartate 159 each contribute to the Ca(2+) site. The Mn(2+) site is built by aspartate 159 and histidine 166. Residues 211–217 (NSLEEEN) constitute a propeptide that is removed on maturation. Residues glycine 246 and alanine 247 each contribute to the D-glucose site. The propeptide occupies 270-275 (KQAADA).

Belongs to the leguminous lectin family. As to quaternary structure, heterotetramer of two alpha and two beta chains. In terms of processing, the mature form consists of two chains, alpha and beta, produced by cleavage of the immature protein. These remain cleaved, yet fold together to form one subunit.

D-mannose specific lectin. In Lens culinaris subsp. culinaris (Cultivated lentil), this protein is Lectin.